The chain runs to 211 residues: Arginine exporter protein ArgO (211 aa).

A run of 6 helical transmembrane segments spans residues 1–21 (MISYYFQGFALGAAMILPLGP), 37–57 (LMIALLCALSDLVLISAGIFG), 68–88 (LLALVTWGGVAFLLWYGFGAL), 111–131 (IIATMLAVTWLNPHVYLDTFV), 147–167 (WFALGTISASFLWFFGLALLA), and 179–199 (AQRIINILVGVVMWLIAFQLA).

It belongs to the LysE/ArgO transporter (TC 2.A.75) family.

It is found in the cell inner membrane. It catalyses the reaction L-arginine(in) = L-arginine(out). In terms of biological role, involved in the export of arginine. Important to control the intracellular level of arginine and the correct balance between arginine and lysine. In Salmonella choleraesuis (strain SC-B67), this protein is Arginine exporter protein ArgO.